We begin with the raw amino-acid sequence, 953 residues long: Communesin biosynthesis cluster-specific transcription factor cnsN (953 aa).

Residues 371 to 418 (ELESTSPRTSHSSLSQDDTASLHSRSSLSSSPGRFPPSQKLVATSDSP) are disordered. Residues 374–408 (STSPRTSHSSLSQDDTASLHSRSSLSSSPGRFPPS) show a composition bias toward low complexity.

The protein resides in the nucleus. In terms of biological role, transcriptional regulator; part of the gene cluster that mediates the biosynthesis of communesins, a prominent class of indole alkaloids with great potential as pharmaceuticals. The polypeptide is Communesin biosynthesis cluster-specific transcription factor cnsN (Penicillium expansum (Blue mold rot fungus)).